The chain runs to 992 residues: UvrABC system protein A (992 aa).

Over residues 1–11 (MPKNSSTTVSS) the composition is skewed to polar residues. The disordered stretch occupies residues 1-30 (MPKNSSTTVSSAVEAHAGGLASGPGGARSG). 62–69 (GLSGSGKS) contributes to the ATP binding site. The C4-type; atypical zinc finger occupies 302–330 (CPNGHEQTVDEIEPRSFSFNNPFGACPEC). ABC transporter domains lie at 360 to 639 (WSLG…TRSV) and 659 to 988 (PEKG…RFLA). 692 to 699 (GVSGSGKS) is a binding site for ATP. The segment at 791–817 (CEACAGDGTLKIEMNFLPDVYVPCEVC) adopts a C4-type zinc-finger fold.

This sequence belongs to the ABC transporter superfamily. UvrA family. In terms of assembly, forms a heterotetramer with UvrB during the search for lesions.

The protein resides in the cytoplasm. Its function is as follows. The UvrABC repair system catalyzes the recognition and processing of DNA lesions. UvrA is an ATPase and a DNA-binding protein. A damage recognition complex composed of 2 UvrA and 2 UvrB subunits scans DNA for abnormalities. When the presence of a lesion has been verified by UvrB, the UvrA molecules dissociate. The sequence is that of UvrABC system protein A from Micrococcus luteus (Micrococcus lysodeikticus).